We begin with the raw amino-acid sequence, 492 residues long: 3-octaprenyl-4-hydroxybenzoate carboxy-lyase (492 aa).

Asn177 contributes to the Mn(2+) binding site. Residues 180–182 (IYR), 194–196 (RWL), and 199–200 (RG) contribute to the prenylated FMN site. Glu243 is a Mn(2+) binding site. Asp292 acts as the Proton donor in catalysis.

Belongs to the UbiD family. As to quaternary structure, homohexamer. Prenylated FMN is required as a cofactor. The cofactor is Mn(2+).

It localises to the cell membrane. The enzyme catalyses a 4-hydroxy-3-(all-trans-polyprenyl)benzoate + H(+) = a 2-(all-trans-polyprenyl)phenol + CO2. The protein operates within cofactor biosynthesis; ubiquinone biosynthesis. In terms of biological role, catalyzes the decarboxylation of 3-octaprenyl-4-hydroxy benzoate to 2-octaprenylphenol, an intermediate step in ubiquinone biosynthesis. In Neisseria meningitidis serogroup A / serotype 4A (strain DSM 15465 / Z2491), this protein is 3-octaprenyl-4-hydroxybenzoate carboxy-lyase.